We begin with the raw amino-acid sequence, 824 residues long: MAGEGVEMSEEEGAFEAFVCPLTKQVMRDPVTIETGQTFEREAILKWFRECRDNGRRPTCPLTQRELRDTEVSPSVALRSVIHEWRARNEEKDLDRACASLVGGFAGHAGDEEEEESALRALVHVSQICQRSAASKDLVRRRGVLRAVAEMLKSGSRRLRLKSLQVLRVLVEDNDDNKEELGKGDTIRTIIKFLSNEHVQERELAVSLLHELSGHEPTCERIGAVYGAILLLVGMGSSKSESAVAVDKAESTLRNLDRFDANVKQMADNGRLQPLLTRLLRGEPDTRVAMADYLGELALANDDKAAVAEQAGPLLVGMLRTGATPAKEATLKALREISSSEASAKLLLQRAGVLPPLVNDVLFSTGHLPMKLKELAATILANLVASGADFRSIPLDDDEDDDGGGGGRGRRRTLLSEDVVHSQLHLISNTGPAIGCRLLSVLAGLTSSRATVADVVAAVKSSGATISLIQFIEAAHRDIRVESLKLLRNLAPYMGAELADALGGSLSSLLRAISSDGGGVTEEQAAAVGLLGDLPEGDSSLTRQLFDLGAFRALAPKLAELRRGTIRGGNRYVTPLTEGVVKVMYRVTCALEEDAEYVEFAREAGLAPLFVELLHTNGMDTVQLYSAMALEKLSLQSSHLTAIPAPPSPPAGFGCACLGRRPAAAAVPAGVCRVHGGFCSLRETFCLAQADGGKAVERLVACLDHLDGRVVEAALAALSTLVCDGVDAREGVVVLGEADGLRPVVDIMVESRTEALQRRAVWAVERILRVEEIAGEVAADQTVASALVEAYRNGDPRTRQTAERALRHLDRIPNFSAAFQSKRS.

In terms of domain architecture, U-box spans Gly13–Lys92. 9 ARM repeats span residues Ala133–Glu172, Asp175–Gly214, Pro217–Arg258, Asp260–Leu299, Ala300–Ser339, Glu341–Ala385, Asp396–Gly435, Val441–Val481, and Leu486–Ala525.

As to quaternary structure, interacts with BZR1, BZR2, BZR3 and GSK2. In terms of processing, auto-ubiquitinated. Phosphorylated by GSK2. Phosphorylation of PUB24 increases its cellular stability.

It localises to the cytoplasm. The protein localises to the cytosol. It is found in the nucleus. The catalysed reaction is S-ubiquitinyl-[E2 ubiquitin-conjugating enzyme]-L-cysteine + [acceptor protein]-L-lysine = [E2 ubiquitin-conjugating enzyme]-L-cysteine + N(6)-ubiquitinyl-[acceptor protein]-L-lysine.. It participates in protein modification; protein ubiquitination. In terms of biological role, E3 ubiquitin-protein ligase that functions as a negative regulator of brassinosteroid (BR) signaling. Targets BZR1, a positive regulator of BR signaling pathway, and promotes its degradation via the ubiquitin-26S proteasome pathway. This Oryza sativa subsp. japonica (Rice) protein is U-box domain-containing protein 24.